The primary structure comprises 396 residues: Putative nickel insertion protein (396 aa).

It belongs to the LarC family.

This Methanosarcina barkeri (strain Fusaro / DSM 804) protein is Putative nickel insertion protein.